Here is a 2196-residue protein sequence, read N- to C-terminus: Genome polyprotein (2196 aa).

Residue glycine 2 is the site of N-myristoyl glycine; by host attachment. Residues 2-1506 (GAQVSTQKTG…HVSRAFICLQ (1505 aa)) lie on the Cytoplasmic side of the membrane. An amphipathic alpha-helix region spans residues 568-584 (DLQGDSEHAVESAVSRV). Active-site for protease 2A activity residues include histidine 883 and aspartate 901. Zn(2+) contacts are provided by cysteine 918 and cysteine 920. The active-site For protease 2A activity is the cysteine 972. Positions 978 and 980 each coordinate Zn(2+). Residues 1112–1184 (NNGWLKKFTE…EQSAPSQSDQ (73 aa)) are membrane-binding. The segment at 1112-1250 (NNGWLKKFTE…SPGAGKSVAT (139 aa)) is oligomerization. The tract at residues 1133–1137 (AIKIQ) is RNA-binding. One can recognise an SF3 helicase domain in the interval 1216–1372 (EKKMSNYIQF…SMYSQNGKIN (157 aa)). Zn(2+) contacts are provided by cysteine 1380, cysteine 1392, and cysteine 1397. Residues 1380-1397 (CDEECCPVNFKKCCPLVC) form a C4-type; degenerate zinc finger. Residues 1424–1431 (EYNHRHSV) are RNA-binding. Positions 1435–1440 (LEALFQ) are oligomerization. Residues 1507–1522 (ALTTFVSVAGIIYIIY) lie within the membrane without spanning it. Residues 1523 to 2196 (KLFAGFQGAY…TLRRKWLDSF (674 aa)) lie on the Cytoplasmic side of the membrane. Tyrosine 1532 is modified (O-(5'-phospho-RNA)-tyrosine). The 179-residue stretch at 1552–1730 (GPAFEFAVAM…FSAALLKHYF (179 aa)) folds into the Peptidase C3 domain. Residues histidine 1591, glutamate 1622, and cysteine 1698 each act as for protease 3C activity in the active site. A RdRp catalytic domain is found at 1961 to 2077 (GHLIAFDYSG…SYPWPIDASL (117 aa)). Mg(2+) contacts are provided by aspartate 1967 and aspartate 2063.

The protein belongs to the picornaviruses polyprotein family. In terms of assembly, interacts with capsid protein VP1 and capsid protein VP3 to form heterotrimeric protomers. Interacts with capsid protein VP0, and capsid protein VP3 to form heterotrimeric protomers. Five protomers subsequently associate to form pentamers which serve as building blocks for the capsid. Interacts with capsid protein VP2, capsid protein VP3 and capsid protein VP4 following cleavage of capsid protein VP0. As to quaternary structure, interacts with capsid protein VP1 and capsid protein VP3 in the mature capsid. In terms of assembly, interacts with capsid protein VP0 and capsid protein VP1 to form heterotrimeric protomers. Five protomers subsequently associate to form pentamers which serve as building blocks for the capsid. Interacts with capsid protein VP4 in the mature capsid. Interacts with protein 2C; this interaction may be important for virion morphogenesis. Interacts with capsid protein VP1 and capsid protein VP3. As to quaternary structure, homodimer. In terms of assembly, homohexamer; forms a hexameric ring structure with 6-fold symmetry characteristic of AAA+ ATPases. Interacts (via N-terminus) with host RTN3 (via reticulon domain); this interaction is important for viral replication. Interacts with capsid protein VP3; this interaction may be important for virion morphogenesis. Interacts with protein 3CD. As to quaternary structure, homodimer. Interacts with host GBF1. Interacts (via GOLD domain) with host ACBD3 (via GOLD domain); this interaction allows the formation of a viral protein 3A/ACBD3 heterotetramer with a 2:2 stoichiometry, which will stimulate the recruitment of host PI4KB in order to synthesize PI4P at the viral RNA replication sites. In terms of assembly, interacts with RNA-directed RNA polymerase. Interacts with protein 3AB and with RNA-directed RNA polymerase. As to quaternary structure, interacts with Viral protein genome-linked and with protein 3CD. The cofactor is Mg(2+). Post-translationally, specific enzymatic cleavages in vivo by the viral proteases yield processing intermediates and the mature proteins. Myristoylation is required for the formation of pentamers during virus assembly. Further assembly of 12 pentamers and a molecule of genomic RNA generates the provirion. In terms of processing, during virion maturation, immature virions are rendered infectious following cleavage of VP0 into VP4 and VP2. This maturation seems to be an autocatalytic event triggered by the presence of RNA in the capsid and it is followed by a conformational change infectious virion. Post-translationally, myristoylation is required during RNA encapsidation and formation of the mature virus particle. VPg is uridylylated by the polymerase into VPg-pUpU. This acts as a nucleotide-peptide primer for the genomic RNA replication.

It is found in the virion. It localises to the host cytoplasm. The protein localises to the host cytoplasmic vesicle membrane. Its subcellular location is the host nucleus. The catalysed reaction is a ribonucleoside 5'-triphosphate + H2O = a ribonucleoside 5'-diphosphate + phosphate + H(+). It catalyses the reaction Selective cleavage of Tyr-|-Gly bond in the picornavirus polyprotein.. It carries out the reaction RNA(n) + a ribonucleoside 5'-triphosphate = RNA(n+1) + diphosphate. The enzyme catalyses Selective cleavage of Gln-|-Gly bond in the poliovirus polyprotein. In other picornavirus reactions Glu may be substituted for Gln, and Ser or Thr for Gly.. Replication or transcription is subject to high level of random mutations by the nucleotide analog ribavirin. Functionally, forms an icosahedral capsid of pseudo T=3 symmetry with capsid proteins VP2 and VP3. The capsid is 300 Angstroms in diameter, composed of 60 copies of each capsid protein and enclosing the viral positive strand RNA genome. Capsid protein VP1 mainly forms the vertices of the capsid. Capsid protein VP1 interacts with host cell receptor to provide virion attachment to target host cells. This attachment induces virion internalization. Tyrosine kinases are probably involved in the entry process. After binding to its receptor, the capsid undergoes conformational changes. Capsid protein VP1 N-terminus (that contains an amphipathic alpha-helix) and capsid protein VP4 are externalized. Together, they shape a pore in the host membrane through which viral genome is translocated to host cell cytoplasm. Its function is as follows. Forms an icosahedral capsid of pseudo T=3 symmetry with capsid proteins VP2 and VP3. The capsid is 300 Angstroms in diameter, composed of 60 copies of each capsid protein and enclosing the viral positive strand RNA genome. In terms of biological role, lies on the inner surface of the capsid shell. After binding to the host receptor, the capsid undergoes conformational changes. Capsid protein VP4 is released, Capsid protein VP1 N-terminus is externalized, and together, they shape a pore in the host membrane through which the viral genome is translocated into the host cell cytoplasm. Component of immature procapsids, which is cleaved into capsid proteins VP4 and VP2 after maturation. Allows the capsid to remain inactive before the maturation step. Functionally, cysteine protease that cleaves viral polyprotein and specific host proteins. It is responsible for the autocatalytic cleavage between the P1 and P2 regions, which is the first cleavage occurring in the polyprotein. Also cleaves the host translation initiation factor EIF4G1, in order to shut down the capped cellular mRNA translation. Inhibits the host nucleus-cytoplasm protein and RNA trafficking by cleaving host members of the nuclear pores. Counteracts stress granule formation probably by antagonizing its assembly or promoting its dissassembly. Its function is as follows. Plays an essential role in the virus replication cycle by acting as a viroporin. Creates a pore in the host endoplasmic reticulum and as a consequence releases Ca2+ in the cytoplasm of infected cell. In turn, high levels of cytoplasmic calcium may trigger membrane trafficking and transport of viral ER-associated proteins to viroplasms, sites of viral genome replication. In terms of biological role, induces and associates with structural rearrangements of intracellular membranes. Displays RNA-binding, nucleotide binding and NTPase activities. May play a role in virion morphogenesis and viral RNA encapsidation by interacting with the capsid protein VP3. Localizes the viral replication complex to the surface of membranous vesicles. Together with protein 3CD binds the Cis-Active RNA Element (CRE) which is involved in RNA synthesis initiation. Acts as a cofactor to stimulate the activity of 3D polymerase, maybe through a nucleid acid chaperone activity. Functionally, localizes the viral replication complex to the surface of membranous vesicles. It inhibits host cell endoplasmic reticulum-to-Golgi apparatus transport and causes the disassembly of the Golgi complex, possibly through GBF1 interaction. This would result in depletion of MHC, trail receptors and IFN receptors at the host cell surface. Plays an essential role in viral RNA replication by recruiting ACBD3 and PI4KB at the viral replication sites, thereby allowing the formation of the rearranged membranous structures where viral replication takes place. Its function is as follows. Acts as a primer for viral RNA replication and remains covalently bound to viral genomic RNA. VPg is uridylylated prior to priming replication into VPg-pUpU. The oriI viral genomic sequence may act as a template for this. The VPg-pUpU is then used as primer on the genomic RNA poly(A) by the RNA-dependent RNA polymerase to replicate the viral genome. During genome replication, the VPg-RNA linkage is removed by the host TDP2, thereby accelerating replication. During the late stage of the replication cycle, host TDP2 is excluded from sites of viral RNA synthesis and encapsidation, allowing for the generation of progeny virions. In terms of biological role, involved in the viral replication complex and viral polypeptide maturation. It exhibits protease activity with a specificity and catalytic efficiency that is different from protease 3C. Protein 3CD lacks polymerase activity. Protein 3CD binds to the 5'UTR of the viral genome. Replicates the viral genomic RNA on the surface of intracellular membranes. May form linear arrays of subunits that propagate along a strong head-to-tail interaction called interface-I. Covalently attaches UMP to a tyrosine of VPg, which is used to prime RNA synthesis. The positive stranded RNA genome is first replicated at virus induced membranous vesicles, creating a dsRNA genomic replication form. This dsRNA is then used as template to synthesize positive stranded RNA genomes. ss(+)RNA genomes are either translated, replicated or encapsidated. Functionally, major viral protease that mediates proteolytic processing of the polyprotein. Cleaves host EIF5B, contributing to host translation shutoff. Also cleaves host PABPC1, contributing to host translation shutoff. Cleaves host NLRP1, triggers host N-glycine-mediated degradation of the autoinhibitory NLRP1 N-terminal fragment. The sequence is that of Genome polyprotein from Homo sapiens (Human).